A 497-amino-acid chain; its full sequence is Serine hydroxymethyltransferase (497 aa).

Residues leucine 176 and glycine 180 to leucine 182 contribute to the (6S)-5,6,7,8-tetrahydrofolate site. Lysine 289 carries the post-translational modification N6-(pyridoxal phosphate)lysine. (6S)-5,6,7,8-tetrahydrofolate is bound at residue glutamate 306.

Belongs to the SHMT family. As to quaternary structure, homodimer. Requires pyridoxal 5'-phosphate as cofactor.

The protein localises to the cytoplasm. The enzyme catalyses (6R)-5,10-methylene-5,6,7,8-tetrahydrofolate + glycine + H2O = (6S)-5,6,7,8-tetrahydrofolate + L-serine. Its pathway is one-carbon metabolism; tetrahydrofolate interconversion. It functions in the pathway amino-acid biosynthesis; glycine biosynthesis; glycine from L-serine: step 1/1. Catalyzes the reversible interconversion of serine and glycine with tetrahydrofolate (THF) serving as the one-carbon carrier. This reaction serves as the major source of one-carbon groups required for the biosynthesis of purines, thymidylate, methionine, and other important biomolecules. Also exhibits THF-independent aldolase activity toward beta-hydroxyamino acids, producing glycine and aldehydes, via a retro-aldol mechanism. This Chlamydia pneumoniae (Chlamydophila pneumoniae) protein is Serine hydroxymethyltransferase.